Here is a 138-residue protein sequence, read N- to C-terminus: Basic phospholipase A2 DAV-N6 (138 aa).

The first 16 residues, 1–16 (MRTLWIVAVLLVSVEG), serve as a signal peptide directing secretion. 7 cysteine pairs are disulfide-bonded: cysteine 42–cysteine 131, cysteine 44–cysteine 60, cysteine 59–cysteine 111, cysteine 65–cysteine 138, cysteine 66–cysteine 104, cysteine 73–cysteine 97, and cysteine 91–cysteine 102. The Ca(2+) site is built by tyrosine 43, glycine 45, and glycine 47. Histidine 63 is a catalytic residue. Ca(2+) is bound at residue aspartate 64. Residue aspartate 105 is part of the active site.

Ca(2+) serves as cofactor. Expressed by the venom gland.

The protein localises to the secreted. The enzyme catalyses a 1,2-diacyl-sn-glycero-3-phosphocholine + H2O = a 1-acyl-sn-glycero-3-phosphocholine + a fatty acid + H(+). In terms of biological role, snake venom phospholipase A2 (PLA2) that inhibits neuromuscular transmission by blocking acetylcholine release from the nerve termini. PLA2 catalyzes the calcium-dependent hydrolysis of the 2-acyl groups in 3-sn-phosphoglycerides. This Deinagkistrodon acutus (Hundred-pace snake) protein is Basic phospholipase A2 DAV-N6.